We begin with the raw amino-acid sequence, 449 residues long: Exodeoxyribonuclease 7 large subunit (449 aa).

The protein belongs to the XseA family. In terms of assembly, heterooligomer composed of large and small subunits.

It localises to the cytoplasm. It carries out the reaction Exonucleolytic cleavage in either 5'- to 3'- or 3'- to 5'-direction to yield nucleoside 5'-phosphates.. In terms of biological role, bidirectionally degrades single-stranded DNA into large acid-insoluble oligonucleotides, which are then degraded further into small acid-soluble oligonucleotides. The sequence is that of Exodeoxyribonuclease 7 large subunit from Salmonella heidelberg (strain SL476).